The primary structure comprises 517 residues: Serine O-succinyltransferase (517 aa).

The transit peptide at 1–46 (MSPLNGVARSLPRPFQAVARRPFRVAQPAVACPSNRRSFNHSRSLR) directs the protein to the mitochondrion. The interval 34-66 (SNRRSFNHSRSLRSTGSQSPAPSPRDSSNPALS) is disordered. The segment covering 45 to 64 (LRSTGSQSPAPSPRDSSNPA) has biased composition (polar residues). The AB hydrolase-1 domain maps to 134 to 386 (NVILLHTGLS…LTQQLATKKQ (253 aa)). The segment at 141-144 (GLSA) is important for substrate specificity. Catalysis depends on S238, which acts as the Nucleophile. R307 provides a ligand contact to substrate. Residues 413-436 (QPYQEQPSASTSAEQSASASETGS) are disordered. Over residues 416–436 (QEQPSASTSAEQSASASETGS) the composition is skewed to low complexity. Active-site residues include D461 and H498. Residue D499 participates in substrate binding.

Belongs to the AB hydrolase superfamily. MetX family.

Its subcellular location is the mitochondrion. It carries out the reaction succinyl-CoA + L-serine = O-succinyl-L-serine + CoA. It functions in the pathway amino-acid biosynthesis; L-cysteine biosynthesis; L-cysteine from L-serine: step 1/2. Its function is as follows. Transfers a succinyl group from succinyl-CoA to L-serine, forming succinyl-L-serine. Also has weak serine acetyl transferase activity and homoserine succinyl transferase activity. The polypeptide is Serine O-succinyltransferase (Emericella nidulans (Aspergillus nidulans)).